We begin with the raw amino-acid sequence, 357 residues long: DnaJ homolog subfamily C member 25 (357 aa).

Residues 19–39 (WLLLAPLLLVPLLVRPAEALV) form a helical membrane-spanning segment. The region spanning 48 to 121 (DCYEVLGVSR…ETRKDYDYML (74 aa)) is the J domain. Transmembrane regions (helical) follow at residues 147-167 (VVILVSVCAISVFQYFSWWNS) and 241-261 (LLLFQVLLAPVHLCSYIAWYC).

The protein belongs to the DNAJC25 family.

The protein localises to the membrane. This Rattus norvegicus (Rat) protein is DnaJ homolog subfamily C member 25 (Dnajc25).